The following is a 158-amino-acid chain: 3-hydroxyacyl-[acyl-carrier-protein] dehydratase FabZ (158 aa).

H57 is an active-site residue.

The protein belongs to the thioester dehydratase family. FabZ subfamily.

Its subcellular location is the cytoplasm. It catalyses the reaction a (3R)-hydroxyacyl-[ACP] = a (2E)-enoyl-[ACP] + H2O. In terms of biological role, involved in unsaturated fatty acids biosynthesis. Catalyzes the dehydration of short chain beta-hydroxyacyl-ACPs and long chain saturated and unsaturated beta-hydroxyacyl-ACPs. The protein is 3-hydroxyacyl-[acyl-carrier-protein] dehydratase FabZ of Helicobacter acinonychis (strain Sheeba).